The chain runs to 365 residues: 1-aminocyclopropane-1-carboxylate oxidase homolog 9 (365 aa).

The region spanning 214 to 313 is the Fe2OG dioxygenase domain; the sequence is KGLLMLCHYY…RISVACFVSS (100 aa). Residues His-238, Asp-240, and His-294 each contribute to the Fe cation site. Arg-304 contributes to the 2-oxoglutarate binding site.

The protein belongs to the iron/ascorbate-dependent oxidoreductase family. Fe(2+) is required as a cofactor.

The chain is 1-aminocyclopropane-1-carboxylate oxidase homolog 9 from Arabidopsis thaliana (Mouse-ear cress).